We begin with the raw amino-acid sequence, 180 residues long: ATP-dependent Clp protease proteolytic subunit 2 (180 aa).

The Nucleophile role is filled by S86. H111 is a catalytic residue.

Belongs to the peptidase S14 family. Fourteen ClpP subunits assemble into 2 heptameric rings which stack back to back to give a disk-like structure with a central cavity, resembling the structure of eukaryotic proteasomes.

It is found in the cytoplasm. The catalysed reaction is Hydrolysis of proteins to small peptides in the presence of ATP and magnesium. alpha-casein is the usual test substrate. In the absence of ATP, only oligopeptides shorter than five residues are hydrolyzed (such as succinyl-Leu-Tyr-|-NHMec, and Leu-Tyr-Leu-|-Tyr-Trp, in which cleavage of the -Tyr-|-Leu- and -Tyr-|-Trp bonds also occurs).. Its function is as follows. Cleaves peptides in various proteins in a process that requires ATP hydrolysis. Has a chymotrypsin-like activity. Plays a major role in the degradation of misfolded proteins. The sequence is that of ATP-dependent Clp protease proteolytic subunit 2 from Tropheryma whipplei (strain Twist) (Whipple's bacillus).